Consider the following 193-residue polypeptide: Cerebellin-1 (193 aa).

Positions 1-21 are cleaved as a signal peptide; that stretch reads MLGVLELLLLGAAWLAGPARG. An N-linked (GlcNAc...) asparagine glycan is attached at N23. The interval 34 to 38 is essential for interaction with NRXN1 and linker of two C1q trimers into disulfide-linked hexamers; that stretch reads CLVVC. Residues 57 to 193 enclose the C1q domain; sequence SGSAKVAFSA…TFSGFLVFPL (137 aa). The interval 62–193 is necessary for interaction with CBLN3, and homotrimerization; the sequence is VAFSAIRSTN…TFSGFLVFPL (132 aa). An N-linked (GlcNAc...) asparagine glycan is attached at N79. The essential for interaction with GRID2 stretch occupies residues 122–147; the sequence is YNRQTIQVSLMLNGWPVISAFAGDQD.

As to quaternary structure, homohexamer; disulfide-linked homotrimers. The trimers associate via N-terminal cysteine residues to form disulfide-linked hexamers. May form oligomers with CBLN2, CBLN3 AND CBLN4 prior to secretion. Once secreted, does not interact with other CBLN family members. Interacts with GRID1. Interacts with NRXN1 and NRXN2 long (alpha) and short (beta) isoforms produced by alternative promoter usage. Competes with NLGN1 for NRXN1-binding. Weakly interacts with NRXN3 short isoform and not at all with NRXN3 long isoform. Interacts (via C1q domain) with GRID2; GRID2-binding is calcium-independent; CBLN1 hexamers anchor GRID2 N-terminal domain dimers to monomeric NRXN1 isoform beta; promotes synaptogenesis and mediates the D-Serine-dependent long term depression signals and AMPA receptor endocytosis. Interacts with OTOL1. In terms of processing, the proteolytic processing to yield cerebellin seems to occur either prior to the secretion by presynaptic neurons and subsequent oligomerization or in some other location after release of the mature protein. Post-translationally, sialoglycoprotein. In the Purkinje cells postsynaptic structures. In the cerebellum, cerebellin is much less abundant than [des-Ser1]-cerebellin.

The protein localises to the secreted. Its subcellular location is the postsynaptic cell membrane. Required for synapse integrity and synaptic plasticity. During cerebellar synapse formation, essential for the matching and maintenance of pre- and post-synaptic elements at parallel fiber-Purkinje cell synapses, the establishment of the proper pattern of climbing fiber-Purkinje cell innervation, and induction of long-term depression at parallel fiber-Purkinje cell synapses. Plays a role as a synaptic organizer that acts bidirectionally on both pre- and post-synaptic components. On the one hand induces accumulation of synaptic vesicles in the pre-synaptic part by binding with NRXN1 and in other hand induces clustering of GRID2 and its associated proteins at the post-synaptic site through association of GRID2. NRXN1-CBLN1-GRID2 complex directly induces parallel fiber protrusions that encapsulate spines of Purkinje cells leading to accumulation of GRID2 and synaptic vesicles. Required for CBLN3 export from the endoplasmic reticulum and secretion. NRXN1-CBLN1-GRID2 complex mediates the D-Serine-dependent long term depression signals and AMPA receptor endocytosis. Essential for long-term maintenance but not establishment of excitatory synapses. Inhibits the formation and function of inhibitory GABAergic synapses in cerebellar Purkinje cells. In terms of biological role, the cerebellin peptide exerts neuromodulatory functions. Directly stimulates norepinephrine release via the adenylate cyclase/PKA-dependent signaling pathway; and indirectly enhances adrenocortical secretion in vivo, through a paracrine mechanism involving medullary catecholamine release. The polypeptide is Cerebellin-1 (CBLN1) (Homo sapiens (Human)).